The chain runs to 373 residues: Extensin-1 (373 aa).

An N-terminal signal peptide occupies residues 1-19 (MASFLVLAFSLAFVSQTTA). Tandem repeats lie at residues 25–33 (SPPPPVKHY), 34–40 (SPPPVYK), 41–49 (SPPPPVKHY), 50–56 (SPPPVYK), 57–65 (SPPPPVKHY), 66–72 (SPPPVYK), 73–81 (SPPPPVKYY), 82–88 (SPPPVYK), 97–105 (SPPPPVKHY), 106–112 (SPPPVYK), 113–121 (SPPPPVKHY), 122–128 (SPPPVYK), 129–137 (SPPPPVKHY), 138–144 (SPPPVYK), 145–153 (SPPPPVKHY), 154–160 (SPPPVYK), 161–169 (SPPPPVKYY), 170–176 (SPPPVYK), 177–185 (SPPPPVKHY), 186–192 (SPPPVYK), 193–201 (SPPPPVKYY), 202–208 (SPPPVYK), 209–217 (SPPPPVKHY), 218–224 (SPPPVYK), 225–233 (SPPPPVKYY), 234–240 (SPPPVYK), 241–248 (SPPPPVHY), 249–256 (SPPPVVYH), 257–264 (SPPPPVHY), 265–272 (SPPPVVYH), 273–280 (SPPPPVHY), 281–288 (SPPPVVYH), 289–296 (SPPPPVHY), 297–304 (SPPPVVYH), 305–312 (SPPPPVHY), and 313–320 (SPPPVVYH). Residues 25–233 (SPPPPVKHYS…KSPPPPVKYY (209 aa)) are 13 X 9 AA repeats of S-P-P-P-P-V-K-[HY]-Y. A 13 X 7 AA repeats of S-P-P-P-V-Y-K region spans residues 34-240 (SPPPVYKSPP…KYYSPPPVYK (207 aa)). The segment at 241 to 312 (SPPPPVHYSP…YHSPPPPVHY (72 aa)) is 5 X 8 AA repeats of S-P-P-P-P-V-H-Y. A 5 X 8 AA repeats of S-P-P-P-V-V-Y-H region spans residues 249–320 (SPPPVVYHSP…HYSPPPVVYH (72 aa)). Isodityrosine cross-linking regions lie at residues 329-332 (YEYK) and 363-366 (YLYK). Residues 349–373 (PPPPVHHYSPPHQPYLYKSPPPPHY) form a disordered region.

This sequence belongs to the extensin family. Post-translationally, extensins contain a characteristic repeat of the pentapeptide Ser-Pro(4). For this particular extensin, a typical repeat of Ser-Pro(3) is found. In both cases, the proline residues are hydroxylated and then O-glycosylated (arabinosylation). In terms of processing, synthetised as soluble proteins which become insolubilised in the cell wall through the intermolecular cross-linking of Tyr on adjacent monomers. Isodityrosine (IDT) stabilizes and makes rigid the part of the polypeptide where IDT functional sites are present. As to expression, predominantly expressed in the roots. Not detected in the leaves, nor in flowers or flower buds. Wounding reverses this pattern, turning on the gene in the leaves and repressing it in the roots.

Its subcellular location is the secreted. It localises to the primary cell wall. In terms of biological role, structural component which strengthens the primary cell wall. The polypeptide is Extensin-1 (Arabidopsis thaliana (Mouse-ear cress)).